The chain runs to 573 residues: 60 kDa heat shock protein, mitochondrial (573 aa).

Residues 1 to 26 (MLRLPAVLRQIRPVSRALAPHLTRAY) constitute a mitochondrion transit peptide. ATP contacts are provided by residues Lys-75 and 111–115 (DGTTT). At Tyr-227 the chain carries Phosphotyrosine. Residues Gly-440 and Asp-520 each contribute to the ATP site.

The protein localises to the mitochondrion matrix. It catalyses the reaction ATP + H2O + a folded polypeptide = ADP + phosphate + an unfolded polypeptide.. In terms of biological role, chaperonin implicated in mitochondrial protein import and macromolecular assembly. Together with Hsp10, facilitates the correct folding of imported proteins. May also prevent misfolding and promote the refolding and proper assembly of unfolded polypeptides generated under stress conditions in the mitochondrial matrix. The functional units of these chaperonins consist of heptameric rings of the large subunit Hsp60, which function as a back-to-back double ring. In a cyclic reaction, Hsp60 ring complexes bind one unfolded substrate protein per ring, followed by the binding of ATP and association with 2 heptameric rings of the co-chaperonin Hsp10. This leads to sequestration of the substrate protein in the inner cavity of Hsp60 where, for a certain period of time, it can fold undisturbed by other cell components. Synchronous hydrolysis of ATP in all Hsp60 subunits results in the dissociation of the chaperonin rings and the release of ADP and the folded substrate protein. The polypeptide is 60 kDa heat shock protein, mitochondrial (Gallus gallus (Chicken)).